The chain runs to 208 residues: Small ribosomal subunit protein uS4 (208 aa).

The S4 RNA-binding domain occupies Arg-95–Asn-157.

It belongs to the universal ribosomal protein uS4 family. In terms of assembly, part of the 30S ribosomal subunit. Contacts protein S5. The interaction surface between S4 and S5 is involved in control of translational fidelity.

Its function is as follows. One of the primary rRNA binding proteins, it binds directly to 16S rRNA where it nucleates assembly of the body of the 30S subunit. In terms of biological role, with S5 and S12 plays an important role in translational accuracy. The protein is Small ribosomal subunit protein uS4 of Borrelia garinii subsp. bavariensis (strain ATCC BAA-2496 / DSM 23469 / PBi) (Borreliella bavariensis).